We begin with the raw amino-acid sequence, 1109 residues long: DNA mismatch repair protein MSH7 (1109 aa).

Disordered stretches follow at residues 19 to 45 and 61 to 86; these read TKGL…KEGD and DEVR…KPAE. The segment covering 61-74 has biased composition (basic and acidic residues); sequence DEVRGTDTPPEKVP. 853–860 lines the ATP pocket; sequence GPNMGGKS.

The protein belongs to the DNA mismatch repair MutS family. In terms of assembly, heterodimer consisting of MSH2-MSH7 (MutS gamma).

The protein resides in the nucleus. Its function is as follows. Component of the post-replicative DNA mismatch repair system (MMR). Forms the heterodimer MutS gamma (MSH2-MSH7 heterodimer) which binds to DNA mismatches thereby initiating DNA repair. MutS gamma recognizes specifically the T/G single base mismatch, but not trinucleotide insertion-deletion loops (IDL). The protein is DNA mismatch repair protein MSH7 (MSH7) of Arabidopsis thaliana (Mouse-ear cress).